Here is a 573-residue protein sequence, read N- to C-terminus: Protein phosphatase EYA3 (573 aa).

The residue at position 1 (methionine 1) is an N-acetylmethionine. Disordered regions lie at residues 1-46 (MEEE…LASN) and 236-296 (TYQS…DATS). Residues 20–46 (SGEQTISQVSNPDVSDQKPETSSLASN) show a composition bias toward polar residues. Positions 254–271 (LSSGDPSTSPSLSQTTPS) are enriched in low complexity. 2 positions are modified to phosphoserine: serine 262 and serine 266. The active-site Nucleophile is aspartate 309. Mg(2+) is bound by residues aspartate 309 and aspartate 311. The active-site Proton donor is aspartate 311. A phosphoserine mark is found at serine 438 and serine 472. Aspartate 537 is a Mg(2+) binding site.

The protein belongs to the HAD-like hydrolase superfamily. EYA family. As to quaternary structure, interacts with SIX1 and DACH1, and probably SIX2, SIX4, SIX5. The cofactor is Mg(2+). In terms of processing, ser-266 phosphorylation is required for localization at sites of DNA damage and directing interaction with H2AX.

It is found in the cytoplasm. Its subcellular location is the nucleus. The catalysed reaction is O-phospho-L-tyrosyl-[protein] + H2O = L-tyrosyl-[protein] + phosphate. In terms of biological role, tyrosine phosphatase that specifically dephosphorylates 'Tyr-142' of histone H2AX (H2AXY142ph). 'Tyr-142' phosphorylation of histone H2AX plays a central role in DNA repair and acts as a mark that distinguishes between apoptotic and repair responses to genotoxic stress. Promotes efficient DNA repair by dephosphorylating H2AX, promoting the recruitment of DNA repair complexes containing MDC1. Its function as histone phosphatase probably explains its role in transcription regulation during organogenesis. Coactivates SIX1, and seems to coactivate SIX2, SIX4 and SIX5. The repression of precursor cell proliferation in myoblasts by SIX1 is switched to activation through recruitment of EYA3 to the SIX1-DACH1 complex and seems to be dependent on EYA3 phosphatase activity. May be involved in development of the eye. In Homo sapiens (Human), this protein is Protein phosphatase EYA3 (EYA3).